The following is a 308-amino-acid chain: Elongation factor Ts (308 aa).

The segment at 80 to 83 is involved in Mg(2+) ion dislocation from EF-Tu; that stretch reads TDFV.

It belongs to the EF-Ts family.

The protein localises to the cytoplasm. Functionally, associates with the EF-Tu.GDP complex and induces the exchange of GDP to GTP. It remains bound to the aminoacyl-tRNA.EF-Tu.GTP complex up to the GTP hydrolysis stage on the ribosome. The polypeptide is Elongation factor Ts (Rhodopseudomonas palustris (strain BisB18)).